Reading from the N-terminus, the 175-residue chain is Adenine phosphoribosyltransferase (175 aa).

This sequence belongs to the purine/pyrimidine phosphoribosyltransferase family. Homodimer.

The protein resides in the cytoplasm. The enzyme catalyses AMP + diphosphate = 5-phospho-alpha-D-ribose 1-diphosphate + adenine. The protein operates within purine metabolism; AMP biosynthesis via salvage pathway; AMP from adenine: step 1/1. Its function is as follows. Catalyzes a salvage reaction resulting in the formation of AMP, that is energically less costly than de novo synthesis. The polypeptide is Adenine phosphoribosyltransferase (Lactobacillus acidophilus (strain ATCC 700396 / NCK56 / N2 / NCFM)).